The sequence spans 480 residues: Citrate synthase 1, peroxisomal (480 aa).

Active-site residues include H321, H360, and D416.

Belongs to the citrate synthase family. As to expression, expressed only in siliques. Not expressed in flower, stem, cauline leaf, young leaf, mature leaf and senescent leaf.

The protein localises to the peroxisome. The catalysed reaction is oxaloacetate + acetyl-CoA + H2O = citrate + CoA + H(+). The protein operates within carbohydrate metabolism; tricarboxylic acid cycle; isocitrate from oxaloacetate: step 1/2. The polypeptide is Citrate synthase 1, peroxisomal (CSY1) (Arabidopsis thaliana (Mouse-ear cress)).